The sequence spans 529 residues: RE1-silencing transcription factor B (529 aa).

A C2H2-type 1 zinc finger spans residues 156–178; the sequence is FRCKPCQYKAESEEEFVHHIKIH. The segment at 188–210 is disordered; sequence SNKKAQGNEADSSISEESDVSKG. 7 consecutive C2H2-type zinc fingers follow at residues 212–234, 244–266, 272–294, 300–322, 328–351, 357–379, and 385–408; these read IQCD…LKHH, YKCT…LRNH, YTCS…IRTH, YQCI…MRTH, FKCE…RQVH, LTCP…VELH, and FLCP…KSRH. The tract at residues 484–529 is disordered; the sequence is LSSTQKKIKTSDARPEKILDKSRKSSCVKRKSDLLENSNDTQTSTV. Positions 492 to 506 are enriched in basic and acidic residues; the sequence is KTSDARPEKILDKSR. Residues 518–529 show a composition bias toward polar residues; the sequence is LENSNDTQTSTV.

The protein localises to the nucleus. The protein resides in the cytoplasm. Transcriptional repressor which binds neuron-restrictive silencer element (NRSE) and represses neuronal gene transcription in non-neuronal cells. Plays a role in the early development of the nervous system and is required for proper patterning of the neuroectoderm during gastrulation. This involves the correct speciation of the neuroepithelial domain and adequate development of the non-neural ectoderm. This chain is RE1-silencing transcription factor B (rest-b), found in Xenopus laevis (African clawed frog).